Reading from the N-terminus, the 377-residue chain is Bacterial actin-related protein (377 aa).

The protein belongs to the actin family.

Functionally, may be a dominant-negative inhibitor of eukaryotic actin polymerization. The chain is Bacterial actin-related protein (barP) from Haliangium ochraceum (strain DSM 14365 / JCM 11303 / SMP-2).